The sequence spans 224 residues: MASPSFCLFAALLALVSWQAIASDPSPLQDFCVADKHSPVLVNGFACLDPKYVTADHFFKAAMLDTPRKTNKVGSNVTLINVMQIPGLNTLGISIARIDYAPLGQNPPHTHPRATEILTVLEGTLHVGFVTSNPNNTLFSKVLNKGDVFVFPVGLIHFQFNPNPHQPAVAIAALSSQNPGVITIANAVFGSKPPISDEVLAKAFQVGKGTIDWLQAQFWENNHY.

A signal peptide spans 1 to 22; it reads MASPSFCLFAALLALVSWQAIA. A disulfide bridge links cysteine 32 with cysteine 47. Residues 62 to 212 enclose the Cupin type-1 domain; sequence AMLDTPRKTN…AFQVGKGTID (151 aa). Residue asparagine 76 is glycosylated (N-linked (GlcNAc...) asparagine). 3 residues coordinate Mn(2+): histidine 109, histidine 111, and glutamate 116. Asparagine 135 carries an N-linked (GlcNAc...) asparagine glycan. Histidine 157 contacts Mn(2+).

This sequence belongs to the germin family. In terms of assembly, oligomer (believed to be a pentamer but probably hexamer).

The protein localises to the secreted. It localises to the extracellular space. The protein resides in the apoplast. Its function is as follows. Plays a role in broad-spectrum disease resistance. Probably has no oxalate oxidase activity even if the active site is conserved. The polypeptide is Germin-like protein 8-9 (Oryza sativa subsp. japonica (Rice)).